Reading from the N-terminus, the 349-residue chain is NADH-quinone oxidoreductase subunit H (349 aa).

8 consecutive transmembrane segments (helical) span residues 19 to 39 (VWTLTKIVAIIAPLMLCVAYL), 88 to 108 (GLFILGPILAIAPSLAAWAVV), 123 to 143 (LLFLLAITSVEVYGVIIAGWA), 161 to 181 (VSYEVAMGFALICVLLISASL), 202 to 222 (FLSWNWIPLFPMFIVFLISGI), 249 to 269 (GMAFALFFLAEYANMILVSIL), 284 to 304 (FLPDGFFWLALKTAFFLFVFL), and 325 to 345 (VFIPITLVWVIVVAVWMMSPL).

Belongs to the complex I subunit 1 family. In terms of assembly, NDH-1 is composed of 14 different subunits. Subunits NuoA, H, J, K, L, M, N constitute the membrane sector of the complex.

The protein resides in the cell inner membrane. The catalysed reaction is a quinone + NADH + 5 H(+)(in) = a quinol + NAD(+) + 4 H(+)(out). Its function is as follows. NDH-1 shuttles electrons from NADH, via FMN and iron-sulfur (Fe-S) centers, to quinones in the respiratory chain. The immediate electron acceptor for the enzyme in this species is believed to be ubiquinone. Couples the redox reaction to proton translocation (for every two electrons transferred, four hydrogen ions are translocated across the cytoplasmic membrane), and thus conserves the redox energy in a proton gradient. This subunit may bind ubiquinone. This Aromatoleum aromaticum (strain DSM 19018 / LMG 30748 / EbN1) (Azoarcus sp. (strain EbN1)) protein is NADH-quinone oxidoreductase subunit H.